The chain runs to 87 residues: UPF0213 protein SYNAS_10430 (87 aa).

The 77-residue stretch at 2–78 folds into the GIY-YIG domain; that stretch reads SKNYVYILEC…KKMSRAEKLQ (77 aa).

Belongs to the UPF0213 family.

The protein is UPF0213 protein SYNAS_10430 of Syntrophus aciditrophicus (strain SB).